Consider the following 76-residue polypeptide: Small ribosomal subunit protein bS18 (76 aa).

Belongs to the bacterial ribosomal protein bS18 family. As to quaternary structure, part of the 30S ribosomal subunit. Forms a tight heterodimer with protein bS6.

Binds as a heterodimer with protein bS6 to the central domain of the 16S rRNA, where it helps stabilize the platform of the 30S subunit. In Xanthomonas euvesicatoria pv. vesicatoria (strain 85-10) (Xanthomonas campestris pv. vesicatoria), this protein is Small ribosomal subunit protein bS18.